The following is a 232-amino-acid chain: Putative uridine kinase DAS2 (232 aa).

An ATP-binding site is contributed by 17–24 (GGHATGVG).

Belongs to the uridine kinase family.

It localises to the cytoplasm. It is found in the nucleus. The enzyme catalyses uridine + ATP = UMP + ADP + H(+). It carries out the reaction cytidine + ATP = CMP + ADP + H(+). It functions in the pathway pyrimidine metabolism; CTP biosynthesis via salvage pathway; CTP from cytidine: step 1/3. It participates in pyrimidine metabolism; UMP biosynthesis via salvage pathway; UMP from uridine: step 1/1. Its function is as follows. Putative uridine kinase identified in a screen for mutants with increased levels of rDNA transcription. The sequence is that of Putative uridine kinase DAS2 (DAS2) from Saccharomyces cerevisiae (strain ATCC 204508 / S288c) (Baker's yeast).